We begin with the raw amino-acid sequence, 739 residues long: Phosphoribosylformylglycinamidine synthase subunit PurL (739 aa).

Histidine 54 is an active-site residue. Tyrosine 57 and lysine 96 together coordinate ATP. A Mg(2+)-binding site is contributed by glutamate 98. Residues 99–102 (SHNH) and arginine 121 each bind substrate. The Proton acceptor role is filled by histidine 100. Residue aspartate 122 coordinates Mg(2+). Glutamine 245 is a binding site for substrate. Aspartate 275 is a Mg(2+) binding site. Residue 319-321 (ESQ) coordinates substrate. 2 residues coordinate ATP: aspartate 504 and glycine 541. Asparagine 542 contributes to the Mg(2+) binding site. Serine 544 contributes to the substrate binding site.

The protein belongs to the FGAMS family. As to quaternary structure, monomer. Part of the FGAM synthase complex composed of 1 PurL, 1 PurQ and 2 PurS subunits.

The protein resides in the cytoplasm. The catalysed reaction is N(2)-formyl-N(1)-(5-phospho-beta-D-ribosyl)glycinamide + L-glutamine + ATP + H2O = 2-formamido-N(1)-(5-O-phospho-beta-D-ribosyl)acetamidine + L-glutamate + ADP + phosphate + H(+). It participates in purine metabolism; IMP biosynthesis via de novo pathway; 5-amino-1-(5-phospho-D-ribosyl)imidazole from N(2)-formyl-N(1)-(5-phospho-D-ribosyl)glycinamide: step 1/2. In terms of biological role, part of the phosphoribosylformylglycinamidine synthase complex involved in the purines biosynthetic pathway. Catalyzes the ATP-dependent conversion of formylglycinamide ribonucleotide (FGAR) and glutamine to yield formylglycinamidine ribonucleotide (FGAM) and glutamate. The FGAM synthase complex is composed of three subunits. PurQ produces an ammonia molecule by converting glutamine to glutamate. PurL transfers the ammonia molecule to FGAR to form FGAM in an ATP-dependent manner. PurS interacts with PurQ and PurL and is thought to assist in the transfer of the ammonia molecule from PurQ to PurL. The polypeptide is Phosphoribosylformylglycinamidine synthase subunit PurL (Lactococcus lactis subsp. lactis (strain IL1403) (Streptococcus lactis)).